Here is a 171-residue protein sequence, read N- to C-terminus: UPF0398 protein SEQ_1788 (171 aa).

This sequence belongs to the UPF0398 family.

The sequence is that of UPF0398 protein SEQ_1788 from Streptococcus equi subsp. equi (strain 4047).